We begin with the raw amino-acid sequence, 855 residues long: Cytosolic phospholipase A2 zeta (855 aa).

The C2 domain occupies 27 to 145 (EKSEPQWKHR…QLGQPCTKNF (119 aa)). Ca(2+)-binding residues include Asp-60, Asp-66, Asp-116, Asp-118, and Asp-123. The region spanning 304-855 (MSSSGDLDLR…RRQAGGRVGG (552 aa)) is the PLA2c domain. Ser-393 serves as the catalytic Nucleophile. Asp-685 acts as the Proton acceptor in catalysis.

It depends on Ca(2+) as a cofactor. In terms of tissue distribution, strongly expressed in thyroid, expressed at intermediate level in stomach and at very low level in large intestine and prostate.

It localises to the cytoplasm. Its subcellular location is the cytosol. The protein localises to the cell membrane. The protein resides in the mitochondrion. It catalyses the reaction a 1,2-diacyl-sn-glycero-3-phosphocholine + H2O = a 1-acyl-sn-glycero-3-phosphocholine + a fatty acid + H(+). The enzyme catalyses a 1-O-alkyl-2-acyl-sn-glycero-3-phosphocholine + H2O = a 1-O-alkyl-sn-glycero-3-phosphocholine + a fatty acid + H(+). It carries out the reaction 1-hexadecanoyl-2-(9Z-octadecenoyl)-sn-glycero-3-phosphocholine + H2O = 2-(9Z-octadecenoyl)-sn-glycero-3-phosphocholine + hexadecanoate + H(+). The catalysed reaction is 1-hexadecanoyl-2-(9Z,12Z-octadecadienoyl)-sn-glycero-3-phosphocholine + H2O = (9Z,12Z)-octadecadienoate + 1-hexadecanoyl-sn-glycero-3-phosphocholine + H(+). It catalyses the reaction 1-hexadecanoyl-2-(5Z,8Z,11Z,14Z-eicosatetraenoyl)-sn-glycero-3-phosphocholine + H2O = 1-hexadecanoyl-sn-glycero-3-phosphocholine + (5Z,8Z,11Z,14Z)-eicosatetraenoate + H(+). The enzyme catalyses 1-hexadecanoyl-2-(9Z,12Z-octadecadienoyl)-sn-glycero-3-phosphoethanolamine + H2O = 1-hexadecanoyl-sn-glycero-3-phosphoethanolamine + (9Z,12Z)-octadecadienoate + H(+). It carries out the reaction 1-hexadecanoyl-2-(5Z,8Z,11Z,14Z-eicosatetraenoyl)-sn-glycero-3-phosphoethanolamine + H2O = 1-hexadecanoyl-sn-glycero-3-phosphoethanolamine + (5Z,8Z,11Z,14Z)-eicosatetraenoate + H(+). The catalysed reaction is 1-(5Z,8Z,11Z,14Z-eicosatetraenoyl)-2-O-hexadecyl-sn-glycero-3-phosphocholine + H2O = 2-O-hexadecyl-sn-glycero-3-phosphocholine + (5Z,8Z,11Z,14Z)-eicosatetraenoate + H(+). It catalyses the reaction 1-O-hexadecyl-2-(5Z,8Z,11Z,14Z)-eicosatetraenoyl-sn-glycero-3-phosphocholine + H2O = 1-O-hexadecyl-sn-glycero-3-phosphocholine + (5Z,8Z,11Z,14Z)-eicosatetraenoate + H(+). The enzyme catalyses 1-hexadecanoyl-sn-glycero-3-phosphocholine + H2O = sn-glycerol 3-phosphocholine + hexadecanoate + H(+). Its activity is regulated as follows. Stimulated by cytosolic Ca(2+). In terms of biological role, has calcium-dependent phospholipase and lysophospholipase activities with a potential role in membrane lipid remodeling and biosynthesis of lipid mediators. Preferentially hydrolyzes the ester bond of the fatty acyl group attached at sn-2 position of phospholipids (phospholipase A2 activity). Selectively hydrolyzes sn-2 arachidonoyl group from membrane phospholipids, providing the precursor for eicosanoid biosynthesis. In myocardial mitochondria, plays a major role in arachidonate release that is metabolically channeled to the formation of cardioprotective eicosanoids, epoxyeicosatrienoates (EETs). This chain is Cytosolic phospholipase A2 zeta (Pla2g4f), found in Mus musculus (Mouse).